Consider the following 218-residue polypeptide: Trichothecene biosynthesis transcription regulator TRI6 (218 aa).

The disordered stretch occupies residues 154–181 (SQSTNDPGDAGKKGFATRKDRARHEAKH). The segment covering 162–176 (DAGKKGFATRKDRAR) has biased composition (basic and acidic residues). Residues 185–215 (IRCQWRDNNGDQCTRTFSRMDNMRDHFRRIH) form a C2H2-type zinc finger.

The protein localises to the nucleus. Transcriptional activator of part of the trichothecene biosynthesis cluster that mediates the production of the antimicrobial trichothecene harzianum A (HA) that plays a role in Botrytis cinerea antagonistic activity and plant defense priming. Regulates expression of both trichothecene and mevalonate pathway genes. This chain is Trichothecene biosynthesis transcription regulator TRI6, found in Trichoderma arundinaceum.